The sequence spans 366 residues: Galactoside alpha-(1,2)-fucosyltransferase 1 (366 aa).

Topologically, residues 1 to 8 (MWPRSHRH) are cytoplasmic. A helical; Signal-anchor for type II membrane protein transmembrane segment spans residues 9–25 (LCLAFLLVCVLSAISFL). Topologically, residues 26–366 (IHFHQDSIRH…LSPLWPLAEP (341 aa)) are lumenal. N-linked (GlcNAc...) asparagine glycans are attached at residues N66, N302, and N328.

It belongs to the glycosyltransferase 11 family.

It localises to the golgi apparatus. Its subcellular location is the golgi stack membrane. It catalyses the reaction a beta-D-galactosyl-(1-&gt;4)-N-acetyl-beta-D-glucosaminyl derivative + GDP-beta-L-fucose = an alpha-L-Fuc-(1-&gt;2)-beta-D-Gal-(1-&gt;4)-beta-D-GlcNAc derivative + GDP + H(+). The catalysed reaction is a ganglioside GA1 + GDP-beta-L-fucose = a ganglioside Fuc-GA1 + GDP + H(+). The enzyme catalyses a beta-D-Gal-(1-&gt;3)-beta-D-GlcNAc-(1-&gt;3)-beta-D-Gal-(1-&gt;4)-beta-D-Glc-(1&lt;-&gt;1')-Cer(d18:1(4E)) + GDP-beta-L-fucose = alpha-L-fucosyl-(1-&gt;2)- beta-D-galactosyl-(1-&gt;3)-N-acetyl-beta-D-glucosaminyl-(1-&gt;3)-beta-D-galactosyl-(1-&gt;4)-beta-D-glucosyl-(1&lt;-&gt;1')-N-acylsphing-4-enine + GDP + H(+). It carries out the reaction a neolactoside nLc4Cer(d18:1(4E)) + GDP-beta-L-fucose = a neolactoside IV(2)-alpha-Fuc-nLc4Cer(d18:1(4E)) + GDP + H(+). It catalyses the reaction a ganglioside GM1 + GDP-beta-L-fucose = a ganglioside Fuc-GM1 + GDP + H(+). The catalysed reaction is beta-D-galactosyl-(1-&gt;3)-N-acetyl-D-galactosamine + GDP-beta-L-fucose = alpha-L-fucosyl-(1-&gt;2)-beta-D-galactosyl-(1-&gt;3)-N-acetyl-D-galactosamine + GDP + H(+). The protein operates within protein modification; protein glycosylation. Its function is as follows. Catalyzes the transfer of L-fucose, from a guanosine diphosphate-beta-L-fucose, to the terminal galactose residue of glycoconjugates through an alpha(1,2) linkage leading to H antigen synthesis that is an intermediate substrate in the synthesis of ABO blood group antigens. H antigen is essential for maturation of the glomerular layer of the main olfactory bulb, in cell migration and early cell-cell contacts during tumor associated angiogenesis. Preferentially fucosylates soluble lactose and to a lesser extent fucosylates glycolipids gangliosides GA1 and GM1a. This Saimiri sciureus (Common squirrel monkey) protein is Galactoside alpha-(1,2)-fucosyltransferase 1.